A 1576-amino-acid chain; its full sequence is Spermatogenesis-associated protein 31D1 (1576 aa).

A helical membrane pass occupies residues 29 to 49 (FICLSGLGLFILYLFYVVLTL). Disordered stretches follow at residues 170 to 197 (FTLASTPSATPPEDLILSPRPKASPPPP), 542 to 572 (HESPVLPPPQPLSLPSTQPLPLPQTLPQGQS), 782 to 801 (KDHLLHGPETSSDKDLRSNS), 952 to 1033 (SQGD…TDFQ), and 1293 to 1347 (RVSP…PPPE). Residues 546-565 (VLPPPQPLSLPSTQPLPLPQ) show a composition bias toward pro residues. Polar residues predominate over residues 966 to 980 (RSTFQGEKLGTTSSV). The segment covering 1004 to 1019 (QFSDTDHDLIETDSKD) has biased composition (basic and acidic residues). Residues 1020–1032 (GASTSLRRGTTDF) show a composition bias toward polar residues.

The protein belongs to the SPATA31 family.

The protein resides in the membrane. Its function is as follows. May play a role in spermatogenesis. This is Spermatogenesis-associated protein 31D1 (SPATA31D1) from Homo sapiens (Human).